Reading from the N-terminus, the 275-residue chain is Phosphate import ATP-binding protein PstB 2 (275 aa).

The region spanning 29–270 is the ABC transporter domain; it reads LEVKNLNIYY…PSEKKTEDYI (242 aa). 61-68 provides a ligand contact to ATP; it reads GPSGCGKS.

This sequence belongs to the ABC transporter superfamily. Phosphate importer (TC 3.A.1.7) family. As to quaternary structure, the complex is composed of two ATP-binding proteins (PstB), two transmembrane proteins (PstC and PstA) and a solute-binding protein (PstS).

It localises to the cell membrane. The enzyme catalyses phosphate(out) + ATP + H2O = ADP + 2 phosphate(in) + H(+). In terms of biological role, part of the ABC transporter complex PstSACB involved in phosphate import. Responsible for energy coupling to the transport system. This Bacillus licheniformis (strain ATCC 14580 / DSM 13 / JCM 2505 / CCUG 7422 / NBRC 12200 / NCIMB 9375 / NCTC 10341 / NRRL NRS-1264 / Gibson 46) protein is Phosphate import ATP-binding protein PstB 2.